Consider the following 274-residue polypeptide: Large ribosomal subunit protein uL2 (274 aa).

Disordered stretches follow at residues 38 to 57 (KRTGGRNNNGHITTRHVGGG) and 224 to 256 (AMNPIDHPHGGGEGRNKGIQPVSPWGQKAKGYK). Positions 229-239 (DHPHGGGEGRN) are enriched in basic and acidic residues.

The protein belongs to the universal ribosomal protein uL2 family. As to quaternary structure, part of the 50S ribosomal subunit. Forms a bridge to the 30S subunit in the 70S ribosome.

Its function is as follows. One of the primary rRNA binding proteins. Required for association of the 30S and 50S subunits to form the 70S ribosome, for tRNA binding and peptide bond formation. It has been suggested to have peptidyltransferase activity; this is somewhat controversial. Makes several contacts with the 16S rRNA in the 70S ribosome. The protein is Large ribosomal subunit protein uL2 of Acinetobacter baumannii (strain AB307-0294).